A 547-amino-acid polypeptide reads, in one-letter code: MFS-type transporter ltbE (547 aa).

The tract at residues 1–23 is disordered; the sequence is MEIAAETTGPAGVTTDVTNAEES. 13 consecutive transmembrane segments (helical) span residues 33-53, 74-94, 104-124, 135-155, 165-185, 195-215, 240-260, 267-287, 310-330, 343-363, 370-390, 399-419, and 432-452; these read QGWALASLTVAFMSICLVLAI, DIGWYGSSYLIAQMALLPTCG, WVYCLSLAIFELGSIIAAVAP, ISGLGAAGLVSGTTTILSYCV, PIVLGMYNIGSAMGPLIGGSI, FIFWINLPFGAVALVLVWFTL, ATLLLGATTCLNLALQWGGIV, KVFGCLIGFGLLLITFLCLQW, GFMMLVQVAIVVQSYFWPIYF, INLLPLIISNSLSTLCAGSLA, VPFMWVGPLILATGGGLYQLV, WIGFQILSGVGYGCCSQMPIL, and TGLVMIMFFQMLGGALAPSVG. An N-linked (GlcNAc...) asparagine glycan is attached at N463. Residues 506 to 526 traverse the membrane as a helical segment; the sequence is VFWVGVATPALAWIASWAMEW.

Belongs to the major facilitator superfamily. TCR/Tet family.

Its subcellular location is the cell membrane. Its function is as follows. MFS-type transporter; part of the gene cluster that mediates the biosynthesis of luteodienoside A, a glycosylated polyketide consisting of an unusual 1-O-beta-D-glucopyranosyl-myo-inositol (glucinol) ester of 3-hydroxy-2,2,4-trimethylocta-4,6-dienoic acid. LtbE is probably involved in the secretion of luteodienoside A. This chain is MFS-type transporter ltbE, found in Aspergillus luteorubrus.